We begin with the raw amino-acid sequence, 175 residues long: Enhancer of mRNA-decapping protein 1 (175 aa).

Residues M1–K27 show a composition bias toward polar residues. Disordered regions lie at residues M1 to T113 and G155 to L175. S2 carries the post-translational modification N-acetylserine. Residues A35 to N47 are compositionally biased toward low complexity. A compositionally biased stretch (polar residues) spans L58–N77. Phosphoserine is present on S82. Residues N100–T113 are compositionally biased toward basic and acidic residues.

It belongs to the EDC family.

The protein resides in the cytoplasm. Its function is as follows. mRNA-binding protein which stimulates mRNA decapping by DCP1 and DCP2. Involved in the regulation of expression of multiple genes involved in glycolysis and gluconeogenesis. This chain is Enhancer of mRNA-decapping protein 1 (EDC1), found in Saccharomyces cerevisiae (strain ATCC 204508 / S288c) (Baker's yeast).